A 186-amino-acid polypeptide reads, in one-letter code: Fucolectin-6 (186 aa).

The first 32 residues, 1–32 (MKTCNLTDRMKVKMIMLLFQILAISTLQSVSA), serve as a signal peptide directing secretion. The tract at residues 40–186 (QENVAVRGKA…VEVNAMLPAN (147 aa)) is F5/8 type C-like. Ca(2+) is bound by residues Asn67, Asp70, Asn72, and Ser81. Cystine bridges form between Cys82–Cys175, Cys114–Cys115, and Cys137–Cys153. The alpha-L-fucose site is built by His84 and Arg111. Residues 111–113 (RGD) carry the Cell attachment site motif. Residue Arg118 participates in alpha-L-fucose binding. Ca(2+) contacts are provided by Cys175 and Glu176.

The protein belongs to the fucolectin family. As to quaternary structure, homotrimer. As to expression, gill mucous cells.

The protein resides in the secreted. Its function is as follows. Acts as a defensive agent. Recognizes blood group fucosylated oligosaccharides including A, B, H and Lewis B-type antigens. Does not recognize Lewis A antigen and has low affinity for monovalent haptens. This chain is Fucolectin-6, found in Anguilla japonica (Japanese eel).